Here is a 347-residue protein sequence, read N- to C-terminus: GMP reductase (347 aa).

108 to 131 is an NADP(+) binding site; the sequence is ADFEKTKQILDLNPALNFVCIDVA. K(+) contacts are provided by Gly181 and Gly183. Cys186 acts as the Thioimidate intermediate in catalysis. NADP(+) is bound at residue 216 to 239; the sequence is IVSDGGCTTPGDVAKAFGGGADFV.

This sequence belongs to the IMPDH/GMPR family. GuaC type 1 subfamily. As to quaternary structure, homotetramer.

It carries out the reaction IMP + NH4(+) + NADP(+) = GMP + NADPH + 2 H(+). Its function is as follows. Catalyzes the irreversible NADPH-dependent deamination of GMP to IMP. It functions in the conversion of nucleobase, nucleoside and nucleotide derivatives of G to A nucleotides, and in maintaining the intracellular balance of A and G nucleotides. The chain is GMP reductase from Shigella flexneri serotype 5b (strain 8401).